A 340-amino-acid chain; its full sequence is MSSKLVNYLRLTFLSFLGIASTSLDAMPAGNPAFPVIPGINIEQKNACSFDLCNSYDVLSALSGNLKLCFCGDYIFSEEAQVKDVPVVTSVTTAGVGPSPDITSTTKTRNFDLVNCNLNTNCVAVAFSLPDRSLSAIPLFDVSFEVKVGGLKQYYRLPMNAYRDFTSEPLNSESEVTDGMIEVQSNYGFVWDVSLKKVIWKDGVSFVGVGADYRHASCPIDYIIANSQANPEVFIADSDGKLNFKEWSVCVGLTTYVNDYVLPYLAFSIGSVSRQAPDDSFKKLEDRFTNLKFKVRKITSSHRGNICIGATNYVADNFFYNVEGRWGSQRAVNVSGGFQF.

The signal sequence occupies residues 1–26 (MSSKLVNYLRLTFLSFLGIASTSLDA).

It belongs to the chlamydial OMP family.

The protein resides in the cell outer membrane. The polypeptide is Outer membrane protein B (ompB) (Chlamydia trachomatis serovar D (strain ATCC VR-885 / DSM 19411 / UW-3/Cx)).